A 190-amino-acid chain; its full sequence is U1 small nuclear ribonucleoprotein C-1 (190 aa).

The Matrin-type zinc finger occupies 4-36 (YYCDYCDVFLVSESPSVRKAHNSGRNHLTNVRD). Positions 57-190 (FETGGGNSTS…PDRARQLGLI (134 aa)) are disordered. A compositionally biased stretch (pro residues) spans 72–82 (GNPPGSQPGPP). Residues 109–124 (AMLALMNGQNGMSSPG) show a composition bias toward low complexity. Over residues 125 to 141 (SGPPPMRFAGPPIPNNM) the composition is skewed to pro residues. Residues 180 to 190 (NPDRARQLGLI) are compositionally biased toward basic and acidic residues.

It belongs to the U1 small nuclear ribonucleoprotein C family. In terms of assembly, U1 snRNP is composed of the 7 core Sm proteins B/B', D1, D2, D3, E, F and G that assemble in a heptameric protein ring on the Sm site of the small nuclear RNA to form the core snRNP, and at least 3 U1 snRNP-specific proteins U1-70K, U1-A and U1-C. U1-C interacts with U1 snRNA and the 5' splice-site region of the pre-mRNA.

It is found in the nucleus. Component of the spliceosomal U1 snRNP, which is essential for recognition of the pre-mRNA 5' splice-site and the subsequent assembly of the spliceosome. U1-C is directly involved in initial 5' splice-site recognition for both constitutive and regulated alternative splicing. The interaction with the 5' splice-site seems to precede base-pairing between the pre-mRNA and the U1 snRNA. Stimulates commitment or early (E) complex formation by stabilizing the base pairing of the 5' end of the U1 snRNA and the 5' splice-site region. This chain is U1 small nuclear ribonucleoprotein C-1, found in Puccinia graminis f. sp. tritici (strain CRL 75-36-700-3 / race SCCL) (Black stem rust fungus).